The primary structure comprises 306 residues: Ribonuclease Z (306 aa).

Zn(2+) contacts are provided by His-63, His-65, Asp-67, His-68, His-140, Asp-211, and His-269. Asp-67 serves as the catalytic Proton acceptor.

This sequence belongs to the RNase Z family. In terms of assembly, homodimer. Zn(2+) is required as a cofactor.

The enzyme catalyses Endonucleolytic cleavage of RNA, removing extra 3' nucleotides from tRNA precursor, generating 3' termini of tRNAs. A 3'-hydroxy group is left at the tRNA terminus and a 5'-phosphoryl group is left at the trailer molecule.. Zinc phosphodiesterase, which displays some tRNA 3'-processing endonuclease activity. Probably involved in tRNA maturation, by removing a 3'-trailer from precursor tRNA. The chain is Ribonuclease Z from Listeria innocua serovar 6a (strain ATCC BAA-680 / CLIP 11262).